Consider the following 166-residue polypeptide: UPF0304 protein VFMJ11_1926 (166 aa).

Belongs to the UPF0304 family.

The chain is UPF0304 protein VFMJ11_1926 from Aliivibrio fischeri (strain MJ11) (Vibrio fischeri).